An 832-amino-acid polypeptide reads, in one-letter code: SID1 transmembrane family member 2 (832 aa).

A signal peptide spans 1–15 (MIAWRLPLCVLLVAA). Residues 16–293 (VESHLGALGP…VSQAVTSEAY (278 aa)) lie on the Extracellular side of the membrane. N-linked (GlcNAc...) asparagine glycosylation is found at N27, N54, N60, N123, N141, and N165. The chain crosses the membrane as a helical span at residues 294-314 (VGGMLFCLGIFLSFYLLTVLL). At 315-447 (ACWENWRQRK…DKRVLRKKYQ (133 aa)) the chain is on the cytoplasmic side. Phosphoserine occurs at positions 401, 403, and 404. A helical transmembrane segment spans residues 448-468 (IYFWNIATIAVFYALPVVQLV). Residues 469 to 499 (ITYQTVVNVTGNQDICYYNFLCAHPLGNLSA) lie on the Extracellular side of the membrane. N-linked (GlcNAc...) asparagine glycans are attached at residues N476 and N496. Residues 500–520 (FNNILSNLGYILLGLLFLLII) form a helical membrane-spanning segment. The Cytoplasmic segment spans residues 521–546 (LQREINHNRALLRNDLYALECGIPKH). The helical transmembrane segment at 547–567 (FGLFYAMGTALMMEGLLSACY) threads the bilayer. Residues 568–605 (HVCPNYTNFQFDTSFMYMIAGLCMLKLYQKRHPDINAS) lie on the Extracellular side of the membrane. N-linked (GlcNAc...) asparagine glycans are attached at residues N572 and N603. A helical transmembrane segment spans residues 606–626 (AYSAYACLAIVIFFSVLGVVF). Residues 627 to 631 (GKGNT) lie on the Cytoplasmic side of the membrane. The helical transmembrane segment at 632-652 (AFWIVFSVIHIISTLLLSTQL) threads the bilayer. Residues 653–688 (YYMGRWKLDSGIFRRILHVLYTDCIRQCSGPLYTDR) are Extracellular-facing. The chain crosses the membrane as a helical span at residues 689–709 (MVLLVMGNIINWSLAAYGLIM). Residues 710–715 (RPNDFA) lie on the Cytoplasmic side of the membrane. A helical transmembrane segment spans residues 716–736 (SYLLAIGICNLLLYFAFYIIM). Residues 737–746 (KLRSGERIKL) are Extracellular-facing. Residues 747-767 (IPLLCIVCTSVVWGFALFFFF) form a helical membrane-spanning segment. The Cytoplasmic portion of the chain corresponds to 768–796 (QGLSTWQKTPAESREHNRDCILLDFFDDH). A helical transmembrane segment spans residues 797 to 817 (DIWHFLSSIAMFGSFLVLLTL). Topologically, residues 818–832 (DDDLDTVQRDKIYVF) are extracellular.

It belongs to the SID1 family. As to quaternary structure, interacts with adapter protein complex 1 (AP-1) and AP-2, but not AP-3 and AP-4. Interacts with LAMP2. In terms of processing, glycosylated. Highly expressed in the liver, brain, kidney and intestine (at protein level).

The protein localises to the lysosome membrane. The protein resides in the cell membrane. Its function is as follows. Mediates the translocation of RNA and DNA across the lysosomal membrane during RNA and DNA autophagy (RDA), a process in which RNA or DNA is directly imported into lysosomes in an ATP-dependent manner, and degraded. Involved in the uptake of single-stranded oligonucleotides by living cells, a process called gymnosis. In vitro, mediates the uptake of linear DNA more efficiently than that of circular DNA, but exhibits similar uptake efficacy toward RNA and DNA. Binds long double-stranded RNA (dsRNA) (500 - 700 base pairs), but not dsRNA shorter than 100 bp. This Rattus norvegicus (Rat) protein is SID1 transmembrane family member 2 (Sidt2).